Reading from the N-terminus, the 520-residue chain is Erythritol kinase (520 aa).

Belongs to the FGGY kinase family.

The enzyme catalyses erythritol + ATP = D-erythritol 1-phosphate + ADP + H(+). It functions in the pathway carbohydrate metabolism; erythritol degradation. Functionally, catalyzes the phosphorylation of erythritol to D-erythritol-1-phosphate. The chain is Erythritol kinase from Brucella abortus (strain 2308).